The following is a 416-amino-acid chain: Phosphoglycerate kinase (416 aa).

Residues Val23, Asp24, Phe25, Asn26, Gln38, Arg39, Ser62, His63, Gly65, Arg66, Leu121, Arg122, His168, and Arg169 each coordinate (2R)-3-phosphoglycerate. Residue Gly212 participates in ADP binding. Position 212 (Gly212) interacts with CDP. AMP is bound by residues Ala213 and Lys214. Residue Ala213 coordinates ATP. Residue Ala213 coordinates Mg(2+). Positions 216 and 217 each coordinate Mg(2+). Asp217 contributes to the CDP binding site. Lys218 contacts AMP. Lys218 lines the ATP pocket. Gly236 is an ADP binding site. Gly236 contributes to the CDP binding site. AMP-binding residues include Gly237 and Gly311. Residues Gly237 and Gly311 each coordinate ATP. Residues Gly336 and Phe341 each contribute to the CDP site. An ADP-binding site is contributed by Phe341. Glu342 serves as a coordination point for AMP. Residues Glu342, Asp373, and Thr374 each contribute to the ATP site. Asp373 contacts Mg(2+).

Belongs to the phosphoglycerate kinase family. In terms of assembly, monomer. Mg(2+) serves as cofactor.

The protein localises to the cytoplasm. It localises to the mitochondrion. The catalysed reaction is (2R)-3-phosphoglycerate + ATP = (2R)-3-phospho-glyceroyl phosphate + ADP. It participates in carbohydrate degradation; glycolysis; pyruvate from D-glyceraldehyde 3-phosphate: step 2/5. Functionally, catalyzes one of the two ATP producing reactions in the glycolytic pathway via the reversible conversion of 1,3-diphosphoglycerate to 3-phosphoglycerate. Both L- and D- forms of purine and pyrimidine nucleotides can be used as substrates, but the activity is much lower on pyrimidines. Negatively regulates the biosynthesis of acetyl-CoA from pyruvate in the mitochondrion. The sequence is that of Phosphoglycerate kinase (PGK1) from Candida glabrata (strain ATCC 2001 / BCRC 20586 / JCM 3761 / NBRC 0622 / NRRL Y-65 / CBS 138) (Yeast).